The primary structure comprises 692 residues: Protein arginine N-methyltransferase 7 (692 aa).

2 SAM-dependent MTase PRMT-type domains span residues 14–359 and 368–692; these read ENSW…YSLW and AKTV…QEKR.

The protein belongs to the class I-like SAM-binding methyltransferase superfamily. Protein arginine N-methyltransferase family. PRMT7 subfamily.

In terms of biological role, essential arginine methyltransferase that can both catalyze the formation of omega-N monomethylarginine (MMA) and symmetrical dimethylarginine (sDMA). Specifically mediates the symmetrical dimethylation of arginine residues in the small nuclear ribonucleoproteins SmD1 and SmD3. This chain is Protein arginine N-methyltransferase 7 (Art7), found in Drosophila pseudoobscura pseudoobscura (Fruit fly).